Reading from the N-terminus, the 806-residue chain is Acetyl-CoA decarbonylase/synthase complex subunit alpha 1 (806 aa).

Positions 73, 76, 77, 79, 84, and 94 each coordinate [4Fe-4S] cluster. His-117 contacts CO. Positions 250, 278, and 323 each coordinate [Ni-4Fe-4S] cluster. 2 consecutive 4Fe-4S ferredoxin-type domains span residues 407-436 (DEEFADWVAKCADCGACMIACPEELDIPEA) and 446-475 (SYLEELHDQCIGCRRCEQVCKKEIPILNII). Residues Cys-417, Cys-420, Cys-423, Cys-427, Cys-455, Cys-458, Cys-461, and Cys-465 each contribute to the [4Fe-4S] cluster site. The [Ni-4Fe-4S] cluster site is built by Cys-523, Cys-552, and Cys-587.

The protein belongs to the Ni-containing carbon monoxide dehydrogenase family. Heterotetramer of two alpha and two epsilon subunits. The ACDS complex is made up of alpha, epsilon, beta, gamma and delta subunits with a probable stoichiometry of (alpha(2)epsilon(2))(4)-beta(8)-(gamma(1)delta(1))(8). [4Fe-4S] cluster serves as cofactor. Requires [Ni-4Fe-4S] cluster as cofactor.

The enzyme catalyses CO + 2 oxidized [2Fe-2S]-[ferredoxin] + H2O = 2 reduced [2Fe-2S]-[ferredoxin] + CO2 + 2 H(+). It functions in the pathway one-carbon metabolism; methanogenesis from acetate. Its function is as follows. Part of the ACDS complex that catalyzes the reversible cleavage of acetyl-CoA, allowing growth on acetate as sole source of carbon and energy. The alpha-epsilon subcomponent functions as a carbon monoxide dehydrogenase. The protein is Acetyl-CoA decarbonylase/synthase complex subunit alpha 1 of Methanosarcina acetivorans (strain ATCC 35395 / DSM 2834 / JCM 12185 / C2A).